The primary structure comprises 199 residues: Chorismate pyruvate-lyase (199 aa).

This sequence belongs to the chorismate pyruvate-lyase type 2 family.

It catalyses the reaction chorismate = 4-hydroxybenzoate + pyruvate. Removes the pyruvyl group from chorismate to provide 4-hydroxybenzoate (4HB). Involved in the synthesis of glycosylated p-hydroxybenzoic acid methyl esters (p-HBADs) and phenolic glycolipids (PGL) that play important roles in the pathogenesis of mycobacterial infections. This is Chorismate pyruvate-lyase from Mycobacterium bovis (strain ATCC BAA-935 / AF2122/97).